A 166-amino-acid chain; its full sequence is Interferon gamma (166 aa).

The N-terminal stretch at 1–23 is a signal peptide; sequence MKYTSYILALQLCVLLGFSGSYG. Residue Q24 is modified to Pyrrolidone carboxylic acid. N-linked (GlcNAc...) asparagine glycosylation is found at N39 and N106.

Belongs to the type II (or gamma) interferon family. Homodimer. Interacts with IFNGR1 (via extracellular domain); this interaction promotes IFNGR1 dimerization. As to expression, released primarily from activated T lymphocytes.

It is found in the secreted. In terms of biological role, type II interferon produced by immune cells such as T-cells and NK cells that plays crucial roles in antimicrobial, antiviral, and antitumor responses by activating effector immune cells and enhancing antigen presentation. Primarily signals through the JAK-STAT pathway after interaction with its receptor IFNGR1 to affect gene regulation. Upon IFNG binding, IFNGR1 intracellular domain opens out to allow association of downstream signaling components JAK2, JAK1 and STAT1, leading to STAT1 activation, nuclear translocation and transcription of IFNG-regulated genes. Many of the induced genes are transcription factors such as IRF1 that are able to further drive regulation of a next wave of transcription. Plays a role in class I antigen presentation pathway by inducing a replacement of catalytic proteasome subunits with immunoproteasome subunits. In turn, increases the quantity, quality, and repertoire of peptides for class I MHC loading. Increases the efficiency of peptide generation also by inducing the expression of activator PA28 that associates with the proteasome and alters its proteolytic cleavage preference. Up-regulates as well MHC II complexes on the cell surface by promoting expression of several key molecules such as cathepsins B/CTSB, H/CTSH, and L/CTSL. Participates in the regulation of hematopoietic stem cells during development and under homeostatic conditions by affecting their development, quiescence, and differentiation. The polypeptide is Interferon gamma (IFNG) (Cervus elaphus (Red deer)).